We begin with the raw amino-acid sequence, 95 residues long: Non-specific lipid-transfer protein (95 aa).

3 cysteine pairs are disulfide-bonded: cysteine 4–cysteine 52, cysteine 14–cysteine 29, and cysteine 50–cysteine 90.

Belongs to the plant LTP family. In terms of tissue distribution, seeds.

Its function is as follows. Plant non-specific lipid-transfer proteins transfer phospholipids as well as galactolipids across membranes. May play a role in wax or cutin deposition in the cell walls of expanding epidermal cells and certain secretory tissues. The chain is Non-specific lipid-transfer protein from Eleusine coracana (Indian finger millet).